A 164-amino-acid chain; its full sequence is UPF0114 protein Sbal223_3668 (164 aa).

Helical transmembrane passes span 15 to 35, 53 to 73, 108 to 128, and 136 to 156; these read IMAPIYLGLSLVLIGLGIKFF, LVLVTLSLIDITLVGGLIVMV, KVAASIVAISSIHLLKIFMDV, and IMWYLLIHITFVLSAFAMGYL.

Belongs to the UPF0114 family.

The protein localises to the cell membrane. The protein is UPF0114 protein Sbal223_3668 of Shewanella baltica (strain OS223).